The following is a 323-amino-acid chain: MSPHKISDNHRHLMLSRFMMGNGVSIINMPFSGGQPKDGAELAPEMVEKAGLVDDLEHLGYDVKLIQNPEFKSRPSKEGPNQALMKNPLYVSNVTRQVRDAVQRELEQQRVVVNIGGDHSLAIGTVEGVQAVYDDACVLWIDAHADINTPESSPSKNLHGCPLSFSLGYAEPLPEEFAWTKRVIEERRLAFIGLRDLDPMERAFLRERNIAAYTMHHVDKYGIGRVVEMAMEHINPGKRRPVHLSFDVDACDPIVAPATGTRVPGGLTFREAMYICEAVAESGTLVAVDVMEVNPLLGNEEEAKTTVDLARSIVRTSLGQTLL.

Residues His-119, Asp-142, His-144, and Asp-146 each contribute to the Mn(2+) site. Residues 144 to 148, 155 to 157, and Asp-198 each bind substrate; these read HADIN and SKN. Residues Asp-247 and Asp-249 each contribute to the Mn(2+) site. 2 residues coordinate substrate: Thr-261 and Glu-292.

The protein belongs to the arginase family. In terms of assembly, homotrimer. It depends on Mn(2+) as a cofactor.

It carries out the reaction L-arginine + H2O = urea + L-ornithine. It functions in the pathway nitrogen metabolism; urea cycle; L-ornithine and urea from L-arginine: step 1/1. The chain is Arginase (aru1) from Schizosaccharomyces pombe (strain 972 / ATCC 24843) (Fission yeast).